A 207-amino-acid chain; its full sequence is Vascular endothelial growth factor B (207 aa).

Residues M1–A21 form the signal peptide. Cystine bridges form between C47-C89, C78-C122, and C82-C124. Residues C122–A139 show a composition bias toward basic and acidic residues. The tract at residues C122–A207 is disordered. A compositionally biased stretch (low complexity) spans P174–A207.

Belongs to the PDGF/VEGF growth factor family. In terms of assembly, homodimer; disulfide-linked. Can also form heterodimer with VEGF. Post-translationally, VEGF-B186 is O-glycosylated. In terms of tissue distribution, expressed in all tissues except liver. Highest levels found in heart, skeletal muscle and pancreas.

The protein resides in the secreted. Its function is as follows. Growth factor for endothelial cells. VEGF-B167 binds heparin and neuropilin-1 whereas the binding to neuropilin-1 of VEGF-B186 is regulated by proteolysis. This Homo sapiens (Human) protein is Vascular endothelial growth factor B (VEGFB).